The primary structure comprises 470 residues: uncharacterized protein (470 aa).

The region spanning 1 to 69 (MTRYQHLATL…PRSGYFVAQR (69 aa)) is the HTH gntR-type domain. Position 313 is an N6-(pyridoxal phosphate)lysine (Lys-313).

It in the C-terminal section; belongs to the class-I pyridoxal-phosphate-dependent aminotransferase family.

This is an uncharacterized protein from Escherichia coli (strain K12).